The sequence spans 60 residues: UPF0509 protein Ent638_2183 (60 aa).

It belongs to the UPF0509 family.

This is UPF0509 protein Ent638_2183 from Enterobacter sp. (strain 638).